Here is a 95-residue protein sequence, read N- to C-terminus: Large ribosomal subunit protein bL25 (95 aa).

This sequence belongs to the bacterial ribosomal protein bL25 family. Part of the 50S ribosomal subunit; part of the 5S rRNA/L5/L18/L25 subcomplex. Contacts the 5S rRNA. Binds to the 5S rRNA independently of L5 and L18.

In terms of biological role, this is one of the proteins that binds to the 5S RNA in the ribosome where it forms part of the central protuberance. The protein is Large ribosomal subunit protein bL25 of Yersinia enterocolitica serotype O:8 / biotype 1B (strain NCTC 13174 / 8081).